The chain runs to 90 residues: Barrier-to-autointegration factor-like protein (90 aa).

Belongs to the BAF family. As to quaternary structure, homodimer. Heterodimerizes with BANF1. In terms of tissue distribution, expressed strongly in testis and pancreas. Also detected in brain, colon, liver, lung, ovary, placenta, prostate, small intestine, spleen and thymus. Not detected in heart, kidney and skeletal muscle.

Its subcellular location is the nucleus. It is found in the cytoplasm. Its function is as follows. May play a role in BANF1 regulation and influence tissue-specific roles of BANF1. In Homo sapiens (Human), this protein is Barrier-to-autointegration factor-like protein (BANF2).